Here is a 92-residue protein sequence, read N- to C-terminus: Protein S100-B (92 aa).

Position 2 is an N-acetylserine (serine 2). EF-hand domains are found at residues 13 to 48 (DVFH…LEEI) and 49 to 84 (KEQE…VTTA). Histidine 16 provides a ligand contact to Zn(2+). Ca(2+) is bound by residues serine 19 and glutamate 22. Histidine 26 lines the Zn(2+) pocket. Ca(2+) is bound by residues lysine 27, glutamate 32, aspartate 62, aspartate 64, aspartate 66, glutamate 68, and glutamate 73. Zn(2+) is bound by residues histidine 86 and histidine 91.

The protein belongs to the S-100 family. As to quaternary structure, dimer of either two alpha chains, or two beta chains, or one alpha and one beta chain. The S100B dimer binds two molecules of STK38. Interacts with CACYBP in a calcium-dependent manner. Interacts with ATAD3A; this interaction probably occurs in the cytosol prior to ATAD3A mitochondrial targeting. Interacts with S100A6. The S100B dimer interacts with two molecules of CAPZA1. Interacts with AGER. Interacts with PPP5C (via TPR repeats); the interaction is calcium-dependent and modulates PPP5C activity. Interacts with TPPP; this interaction inhibits TPPP dimerization. Interacts with isoform CLSTN3beta of CLSTN3; interaction promotes secretion. Although predominant among the water-soluble brain proteins, S100 is also found in a variety of other tissues.

It is found in the cytoplasm. The protein resides in the nucleus. It localises to the secreted. Functionally, small zinc- and- and calcium-binding protein that is highly expressed in astrocytes and constitutes one of the most abundant soluble proteins in brain. Weakly binds calcium but binds zinc very tightly-distinct binding sites with different affinities exist for both ions on each monomer. Physiological concentrations of potassium ion antagonize the binding of both divalent cations, especially affecting high-affinity calcium-binding sites. Acts as a neurotrophic factor that promotes astrocytosis and axonal proliferation. Involved in innervation of thermogenic adipose tissue by acting as an adipocyte-derived neurotrophic factor that promotes sympathetic innervation of adipose tissue. Binds to and initiates the activation of STK38 by releasing autoinhibitory intramolecular interactions within the kinase. Interaction with AGER after myocardial infarction may play a role in myocyte apoptosis by activating ERK1/2 and p53/TP53 signaling. Could assist ATAD3A cytoplasmic processing, preventing aggregation and favoring mitochondrial localization. May mediate calcium-dependent regulation on many physiological processes by interacting with other proteins, such as TPR-containing proteins, and modulating their activity. The protein is Protein S100-B of Rattus norvegicus (Rat).